A 525-amino-acid chain; its full sequence is MQPKVPQLRRREGLGEEQEKGARGGEGNARTHGTPDLVQWTRHMEAVKTQFLEQAQRELAELLDRALWEAMQAYPKQDRPLPSAAPDSTSKTQELHPGKRKVFITRKSLIDELMEVQHFRTIYHMFIAGLCVLIISTLAIDFIDEGRLMLEFDLLLFSFGQLPLALMTWVPMFLSTLLVPYQTLWLWARPRAGGAWMLGASLGCVLLAAHAVVLCVLPVHVSVRHELPPASRCVLVFEQVRLLMKSYSFLRETVPGIFCVRGGKGISPPSFSSYLYFLFCPTLIYRETYPRTPSIRWNYVAKNFAQVLGCLLYACFILGRLCVPVFANMSREPFSTRALLLSILHATGPGIFMLLLIFFAFLHCWLNAFAEMLRFGDRMFYRDWWNSTSFSNYYRTWNVVVHDWLYSYVYQDGLWLLGRRARGVAMLGVFLVSAVVHEYIFCFVLGFFYPVMLMLFLVFGGLLNFTMNDRHTGPAWNILMWTFLFMGQGIQVSLYCQEWYARRHCPLPQTTFWGMVTPRSWSCHP.

Disordered stretches follow at residues 1-34 and 77-97; these read MQPK…THGT and QDRP…ELHP. At 1–119 the chain is on the cytoplasmic side; that stretch reads MQPKVPQLRR…IDELMEVQHF (119 aa). Positions 9–23 are enriched in basic and acidic residues; it reads RRREGLGEEQEKGAR. His-118 contacts cholesterol. Residues 120-141 traverse the membrane as a helical segment; the sequence is RTIYHMFIAGLCVLIISTLAID. The Lumenal portion of the chain corresponds to 142–161; it reads FIDEGRLMLEFDLLLFSFGQ. A helical membrane pass occupies residues 162–187; it reads LPLALMTWVPMFLSTLLVPYQTLWLW. Over 188 to 199 the chain is Cytoplasmic; it reads ARPRAGGAWMLG. A helical membrane pass occupies residues 200–223; the sequence is ASLGCVLLAAHAVVLCVLPVHVSV. Topologically, residues 224-231 are lumenal; that stretch reads RHELPPAS. The helical transmembrane segment at 232-255 threads the bilayer; that stretch reads RCVLVFEQVRLLMKSYSFLRETVP. At 256-296 the chain is on the cytoplasmic side; the sequence is GIFCVRGGKGISPPSFSSYLYFLFCPTLIYRETYPRTPSIR. Cys-280 carries the post-translational modification Cysteine sulfenic acid (-SOH); alternate. Cys-280 is covalently cross-linked (Glycyl cysteine thioester (Cys-Gly) (interchain with G-Cter in ubiquitin); alternate). A helical transmembrane segment spans residues 297 to 329; the sequence is WNYVAKNFAQVLGCLLYACFILGRLCVPVFANM. Over 330–346 the chain is Lumenal; it reads SREPFSTRALLLSILHA. The chain crosses the membrane as a helical span at residues 347-372; it reads TGPGIFMLLLIFFAFLHCWLNAFAEM. Over 373 to 420 the chain is Cytoplasmic; sequence LRFGDRMFYRDWWNSTSFSNYYRTWNVVVHDWLYSYVYQDGLWLLGRR. The FYXDWWN motif motif lies at 380 to 386; sequence FYRDWWN. An acyl-CoA contacts are provided by Asn-392, Arg-395, Asn-398, His-402, Tyr-410, and Ser-433. The helical transmembrane segment at 421-445 threads the bilayer; sequence ARGVAMLGVFLVSAVVHEYIFCFVL. The active site involves His-437. The Lumenal portion of the chain corresponds to 446–451; the sequence is GFFYPV. The chain crosses the membrane as a helical span at residues 452 to 467; the sequence is MLMLFLVFGGLLNFTM. Over 468-473 the chain is Cytoplasmic; that stretch reads NDRHTG. A helical membrane pass occupies residues 474-505; the sequence is PAWNILMWTFLFMGQGIQVSLYCQEWYARRHC. Topologically, residues 506-525 are lumenal; sequence PLPQTTFWGMVTPRSWSCHP.

This sequence belongs to the membrane-bound acyltransferase family. Sterol o-acyltransferase subfamily. In terms of assembly, may form homo- or heterodimers. Interacts with INSIG1; the interaction is direct and promotes association with AMFR/gp78. Post-translationally, polyubiquitinated by AMFR/gp78 at Cys-280, leading to its degradation when the lipid levels are low. Association with AMFR/gp78 is mediated via interaction with INSIG1. High concentration of cholesterol and fatty acid results in Cys-280 oxidation, preventing ubiquitination at the same site, resulting in protein stabilization. Oxidized at Cys-280: high concentration of cholesterol and fatty acid induce reactive oxygen species, which oxidizes Cys-280, preventing ubiquitination at the same site, and resulting in protein stabilization.

Its subcellular location is the endoplasmic reticulum membrane. It carries out the reaction a sterol + a long-chain fatty acyl-CoA = a long-chain 3-hydroxysterol ester + CoA. It catalyses the reaction cholesterol + an acyl-CoA = a cholesterol ester + CoA. The enzyme catalyses cholesterol + (9Z)-octadecenoyl-CoA = cholesteryl (9Z-octadecenoate) + CoA. The catalysed reaction is (5Z,8Z,11Z,14Z,17Z)-eicosapentaenoyl-CoA + cholesterol = (5Z,8Z,11Z,14Z,17Z-eicosapentaenoyl)-cholesterol + CoA. It carries out the reaction (9Z,12Z,15Z)-octadecatrienoyl-CoA + cholesterol = (9Z,12Z,15Z-octadecatrienoyl)-cholesterol + CoA. It catalyses the reaction (5Z,8Z,11Z,14Z)-eicosatetraenoyl-CoA + cholesterol = cholesteryl (5Z,8Z,11Z,14Z)-eicosatetraenoate + CoA. Functionally, catalyzes the formation of fatty acid-cholesterol esters, which are less soluble in membranes than cholesterol. Plays a role in lipoprotein assembly and dietary cholesterol absorption. Utilizes oleoyl-CoA ((9Z)-octadecenoyl-CoA) and linolenoyl-CoA ((9Z,12Z,15Z)-octadecatrienoyl-CoA) as substrates. May provide cholesteryl esters for lipoprotein secretion from hepatocytes and intestinal mucosa. The protein is Sterol O-acyltransferase 2 of Mus musculus (Mouse).